The following is a 267-amino-acid chain: MIDAEQLRRVSVKVSSETAGLLRDLACSEDLGRVVSGETTVADKRAEDYILDLLRRELGQVQVISEEAGGVASKTSDAPIALVDPLDGSTNYLSCITWCSVSVAFADPRSGEILAGSVAPVYAGMPVSFARGKGCYHGGLKVEDPSIRGSIISVYVDEPGAIESVAGAIGRLKGVRRDFKVRSLGSAALELAYTAIGYIAVFADLRARLRNIDVAAAVGAVRECGGVVTDAHGQPLRIGVWRVERVGSVVASLDEALARIAVGGGSG.

Residues E66, D84, L86, and D87 each coordinate Mg(2+). E66 serves as a coordination point for substrate. Residues L86–S89, R182, and D213 each bind substrate. Residue D213 participates in Mg(2+) binding.

The protein belongs to the inositol monophosphatase superfamily. Mg(2+) serves as cofactor.

It carries out the reaction a myo-inositol phosphate + H2O = myo-inositol + phosphate. This is Inositol-1-monophosphatase (suhB) from Aeropyrum pernix (strain ATCC 700893 / DSM 11879 / JCM 9820 / NBRC 100138 / K1).